A 258-amino-acid chain; its full sequence is Indole-3-glycerol phosphate synthase (258 aa).

It belongs to the TrpC family.

The catalysed reaction is 1-(2-carboxyphenylamino)-1-deoxy-D-ribulose 5-phosphate + H(+) = (1S,2R)-1-C-(indol-3-yl)glycerol 3-phosphate + CO2 + H2O. It functions in the pathway amino-acid biosynthesis; L-tryptophan biosynthesis; L-tryptophan from chorismate: step 4/5. The polypeptide is Indole-3-glycerol phosphate synthase (Chlorobium phaeobacteroides (strain DSM 266 / SMG 266 / 2430)).